The primary structure comprises 242 residues: ATP synthase subunit 4, mitochondrial (242 aa).

The N-terminal 35 residues, 1-35 (MSFRALTMRSAVARTALNNTIRSARVATPYLGIRH), are a transit peptide targeting the mitochondrion.

It belongs to the eukaryotic ATPase B chain family. As to quaternary structure, F-type ATPases have 2 components, CF(1) - the catalytic core - and CF(0) - the membrane proton channel. In yeast, the dimeric form of ATP synthase consists of 17 polypeptides: alpha, beta, gamma, delta, epsilon, 4 (B), 5 (OSCP), 6 (A), 8, 9 (C), d, E (Tim11), f, g, h, i/j and k.

The protein resides in the mitochondrion. It localises to the mitochondrion inner membrane. Its function is as follows. Mitochondrial membrane ATP synthase (F(1)F(0) ATP synthase or Complex V) produces ATP from ADP in the presence of a proton gradient across the membrane which is generated by electron transport complexes of the respiratory chain. F-type ATPases consist of two structural domains, F(1) - containing the extramembraneous catalytic core, and F(0) - containing the membrane proton channel, linked together by a central stalk and a peripheral stalk. During catalysis, ATP synthesis in the catalytic domain of F(1) is coupled via a rotary mechanism of the central stalk subunits to proton translocation. Part of the complex F(0) domain and the peripheric stalk, which acts as a stator to hold the catalytic alpha(3)beta(3) subcomplex and subunit a/ATP6 static relative to the rotary elements. The chain is ATP synthase subunit 4, mitochondrial (ATP4) from Candida glabrata (strain ATCC 2001 / BCRC 20586 / JCM 3761 / NBRC 0622 / NRRL Y-65 / CBS 138) (Yeast).